A 190-amino-acid polypeptide reads, in one-letter code: Shikimate kinase (190 aa).

14-19 (GSGKST) contacts ATP. Residue Ser18 participates in Mg(2+) binding. Asp36, Arg60, and Gly82 together coordinate substrate. ATP is bound at residue Arg120. Arg147 contributes to the substrate binding site.

Belongs to the shikimate kinase family. Monomer. It depends on Mg(2+) as a cofactor.

The protein localises to the cytoplasm. The catalysed reaction is shikimate + ATP = 3-phosphoshikimate + ADP + H(+). It participates in metabolic intermediate biosynthesis; chorismate biosynthesis; chorismate from D-erythrose 4-phosphate and phosphoenolpyruvate: step 5/7. Catalyzes the specific phosphorylation of the 3-hydroxyl group of shikimic acid using ATP as a cosubstrate. The sequence is that of Shikimate kinase from Chlorobium phaeobacteroides (strain DSM 266 / SMG 266 / 2430).